The chain runs to 508 residues: Probable monogalactosyldiacylglycerol synthase 3, chloroplastic (508 aa).

Residues 1–60 constitute a chloroplast transit peptide; it reads MAASSSSSSSMASPRGRSIRETVLETVAAYHQQQRMRRKFRKSLSYAGELSSAGRARGEG. The interval 51-79 is disordered; sequence SSAGRARGEGGASSSASTTSLCGPDEDDE.

It belongs to the glycosyltransferase 28 family.

The protein localises to the plastid. Its subcellular location is the chloroplast membrane. The enzyme catalyses a 1,2-diacyl-sn-glycerol + UDP-alpha-D-galactose = a 1,2-diacyl-3-O-(beta-D-galactosyl)-sn-glycerol + UDP + H(+). Its function is as follows. Involved in the synthesis of the major structural component of photosynthetic membranes. This is Probable monogalactosyldiacylglycerol synthase 3, chloroplastic (MGD3) from Oryza sativa subsp. japonica (Rice).